We begin with the raw amino-acid sequence, 368 residues long: UDP-N-acetylglucosamine--N-acetylmuramyl-(pentapeptide) pyrophosphoryl-undecaprenol N-acetylglucosamine transferase (368 aa).

Residues 11 to 13 (TGG), Asn-123, Arg-164, Ser-188, Ile-250, and Gln-295 each bind UDP-N-acetyl-alpha-D-glucosamine.

The protein belongs to the glycosyltransferase 28 family. MurG subfamily.

The protein localises to the cell inner membrane. It catalyses the reaction di-trans,octa-cis-undecaprenyl diphospho-N-acetyl-alpha-D-muramoyl-L-alanyl-D-glutamyl-meso-2,6-diaminopimeloyl-D-alanyl-D-alanine + UDP-N-acetyl-alpha-D-glucosamine = di-trans,octa-cis-undecaprenyl diphospho-[N-acetyl-alpha-D-glucosaminyl-(1-&gt;4)]-N-acetyl-alpha-D-muramoyl-L-alanyl-D-glutamyl-meso-2,6-diaminopimeloyl-D-alanyl-D-alanine + UDP + H(+). It functions in the pathway cell wall biogenesis; peptidoglycan biosynthesis. Functionally, cell wall formation. Catalyzes the transfer of a GlcNAc subunit on undecaprenyl-pyrophosphoryl-MurNAc-pentapeptide (lipid intermediate I) to form undecaprenyl-pyrophosphoryl-MurNAc-(pentapeptide)GlcNAc (lipid intermediate II). The sequence is that of UDP-N-acetylglucosamine--N-acetylmuramyl-(pentapeptide) pyrophosphoryl-undecaprenol N-acetylglucosamine transferase from Solidesulfovibrio magneticus (strain ATCC 700980 / DSM 13731 / RS-1) (Desulfovibrio magneticus).